The chain runs to 433 residues: tRNA-2-methylthio-N(6)-dimethylallyladenosine synthase (433 aa).

The 116-residue stretch at 3-118 folds into the MTTase N-terminal domain; it reads KKLFIQTLGC…ISRVIHQEKA (116 aa). Residues C12, C49, C81, C150, C154, and C157 each coordinate [4Fe-4S] cluster. The region spanning 136-369 is the Radical SAM core domain; it reads SRNDYKAMVN…QARHKEILEE (234 aa). The TRAM domain occupies 372-433; the sequence is QKEVGAIHSV…YRAFLIGEPL (62 aa).

This sequence belongs to the methylthiotransferase family. MiaB subfamily. In terms of assembly, monomer. It depends on [4Fe-4S] cluster as a cofactor.

The protein resides in the cytoplasm. The catalysed reaction is N(6)-dimethylallyladenosine(37) in tRNA + (sulfur carrier)-SH + AH2 + 2 S-adenosyl-L-methionine = 2-methylsulfanyl-N(6)-dimethylallyladenosine(37) in tRNA + (sulfur carrier)-H + 5'-deoxyadenosine + L-methionine + A + S-adenosyl-L-homocysteine + 2 H(+). Catalyzes the methylthiolation of N6-(dimethylallyl)adenosine (i(6)A), leading to the formation of 2-methylthio-N6-(dimethylallyl)adenosine (ms(2)i(6)A) at position 37 in tRNAs that read codons beginning with uridine. This is tRNA-2-methylthio-N(6)-dimethylallyladenosine synthase from Wolinella succinogenes (strain ATCC 29543 / DSM 1740 / CCUG 13145 / JCM 31913 / LMG 7466 / NCTC 11488 / FDC 602W) (Vibrio succinogenes).